The primary structure comprises 199 residues: Recombination protein RecR (199 aa).

A C4-type zinc finger spans residues 57 to 72; the sequence is CAECRTFTEEEVCHIC. The region spanning 81-176 is the Toprim domain; sequence GQICVVESPA…EASRIAHGVP (96 aa).

This sequence belongs to the RecR family.

May play a role in DNA repair. It seems to be involved in an RecBC-independent recombinational process of DNA repair. It may act with RecF and RecO. This Vibrio parahaemolyticus serotype O3:K6 (strain RIMD 2210633) protein is Recombination protein RecR.